A 515-amino-acid chain; its full sequence is Protein translocase subunit SecD (515 aa).

A helical membrane pass occupies residues 6-26 (LYSLIFIIILTAFAVWVDLPG). A disordered region spans residues 141-186 (AITNGNQNQNSTKNGTPTPGTTPTPESTPQANQTPVAANVTPTPED). The segment covering 150–169 (NSTKNGTPTPGTTPTPESTP) has biased composition (low complexity). A compositionally biased stretch (polar residues) spans 170–186 (QANQTPVAANVTPTPED). The next 5 membrane-spanning stretches (helical) occupy residues 322 to 342 (RSIRAGLIGIGAVALFMILYY), 344 to 364 (LPGFVSVVALAIYAAVVFALF), 367 to 387 (IPVTLTLAGIAGFILSVGMAV), 427 to 447 (ISTLITCAILIWFGSRFGASV), and 450 to 470 (GFAITLAIGVIVSMFTAIFVT).

It belongs to the SecD/SecF family. SecD subfamily. As to quaternary structure, forms a complex with SecF. Part of the essential Sec protein translocation apparatus which comprises SecA, SecYEG and auxiliary proteins SecDF. Other proteins may also be involved.

It is found in the cell membrane. Its function is as follows. Part of the Sec protein translocase complex. Interacts with the SecYEG preprotein conducting channel. SecDF uses the proton motive force (PMF) to complete protein translocation after the ATP-dependent function of SecA. This is Protein translocase subunit SecD from Thermobaculum terrenum (strain ATCC BAA-798 / CCMEE 7001 / YNP1).